Reading from the N-terminus, the 62-residue chain is Small ribosomal subunit protein eS27 (62 aa).

Zn(2+) contacts are provided by cysteine 17, cysteine 20, cysteine 36, and cysteine 39. The C4-type zinc-finger motif lies at 17 to 39; it reads CNDCENEQIIFGSASRKITCVVC.

It belongs to the eukaryotic ribosomal protein eS27 family. Part of the 30S ribosomal subunit. Requires Zn(2+) as cofactor.

In Methanosarcina mazei (strain ATCC BAA-159 / DSM 3647 / Goe1 / Go1 / JCM 11833 / OCM 88) (Methanosarcina frisia), this protein is Small ribosomal subunit protein eS27.